The chain runs to 326 residues: MTMPDLPPDLVEEILSRVPATSVKKLRSTCTQWNAIFKDERFTEKHFSKAPKESMVLMLKEHRVCPDKRLVVWNPCLGETKWIQLKVDYRRYVSKFCLGYIQNNESRRSYKILRSWYSYDDKSSPRQRDLGFEIYEFISDSSWRVLNDGNTYLLAYDVEENSRVVLMFDFTTERFKRLRLPHFQDVGNMDLSVVREEQLSILHWTRNTSKMEIWITNNIDTDATLLWRLHLHTQVFSRNCVRVFSSLYIDKEKKVVLCCNVNDDATSKNIVYIIGEDNGYYTEILFLLPINIHWVLLDRNKKWYSSIFNYVPRLVQIYNGHLLFFS.

Residues 1-50 enclose the F-box domain; it reads MTMPDLPPDLVEEILSRVPATSVKKLRSTCTQWNAIFKDERFTEKHFSKA.

The chain is Putative F-box protein At3g22710 from Arabidopsis thaliana (Mouse-ear cress).